We begin with the raw amino-acid sequence, 105 residues long: Putative membrane protein insertion efficiency factor (105 aa).

The interval 76 to 105 (GHPGGVDPVPPGPHETPRKTSTHDDEPPSR) is disordered. Residues 90–105 (ETPRKTSTHDDEPPSR) are compositionally biased toward basic and acidic residues.

It belongs to the UPF0161 family.

The protein localises to the cell inner membrane. In terms of biological role, could be involved in insertion of integral membrane proteins into the membrane. The protein is Putative membrane protein insertion efficiency factor of Chromohalobacter salexigens (strain ATCC BAA-138 / DSM 3043 / CIP 106854 / NCIMB 13768 / 1H11).